The following is a 250-amino-acid chain: Ribosomal RNA small subunit methyltransferase J (250 aa).

Residues 101 to 102, 117 to 118, 153 to 154, and D171 each bind S-adenosyl-L-methionine; these read RD, ER, and SS.

It belongs to the methyltransferase superfamily. RsmJ family.

The protein localises to the cytoplasm. It carries out the reaction guanosine(1516) in 16S rRNA + S-adenosyl-L-methionine = N(2)-methylguanosine(1516) in 16S rRNA + S-adenosyl-L-homocysteine + H(+). In terms of biological role, specifically methylates the guanosine in position 1516 of 16S rRNA. This is Ribosomal RNA small subunit methyltransferase J from Cronobacter sakazakii (strain ATCC BAA-894) (Enterobacter sakazakii).